Reading from the N-terminus, the 365-residue chain is uncharacterized protein (365 aa).

Residues 18–46 adopt a coiled-coil conformation; that stretch reads TAQEALTLIEKLDSDYKEKEEKITALSVH.

This is an uncharacterized protein from Bacillus subtilis (strain 168).